A 175-amino-acid polypeptide reads, in one-letter code: Probable coatomer subunit zeta-A (175 aa).

Belongs to the adaptor complexes small subunit family. As to quaternary structure, oligomeric complex that consists of at least the alpha, beta, beta', gamma, delta, epsilon and zeta subunits.

It is found in the cytoplasm. The protein resides in the golgi apparatus membrane. Its subcellular location is the cytoplasmic vesicle. It localises to the COPI-coated vesicle membrane. The coatomer is a cytosolic protein complex that binds to dilysine motifs and reversibly associates with Golgi non-clathrin-coated vesicles, which further mediate biosynthetic protein transport from the ER, via the Golgi up to the trans Golgi network. Coatomer complex is required for budding from Golgi membranes, and is essential for the retrograde Golgi-to-ER transport of dilysine-tagged proteins. The zeta subunit may be involved in regulating the coat assembly and, hence, the rate of biosynthetic protein transport due to its association-dissociation properties with the coatomer complex. The chain is Probable coatomer subunit zeta-A (copZa) from Dictyostelium discoideum (Social amoeba).